The primary structure comprises 93 residues: Cell division protein FtsB (93 aa).

Over 1 to 3 (MRL) the chain is Cytoplasmic. The chain crosses the membrane as a helical span at residues 4-21 (FILSLFALLVMFQYDFWF). At 22-93 (GKNGYLDYQD…FYRIVKNKNR (72 aa)) the chain is on the periplasmic side. Positions 28 to 76 (DYQDIKAEIIQRKQENKKLSQRNQTIFAEIQDLKNGIEAIEERARMEHE) form a coiled coil.

The protein belongs to the FtsB family. In terms of assembly, part of a complex composed of FtsB, FtsL and FtsQ.

It is found in the cell inner membrane. Its function is as follows. Essential cell division protein. May link together the upstream cell division proteins, which are predominantly cytoplasmic, with the downstream cell division proteins, which are predominantly periplasmic. This is Cell division protein FtsB from Histophilus somni (strain 129Pt) (Haemophilus somnus).